The sequence spans 146 residues: Large ribosomal subunit protein uL16 (146 aa).

It belongs to the universal ribosomal protein uL16 family. Part of the 50S ribosomal subunit.

Functionally, binds 23S rRNA and is also seen to make contacts with the A and possibly P site tRNAs. The chain is Large ribosomal subunit protein uL16 from Thermomicrobium roseum (strain ATCC 27502 / DSM 5159 / P-2).